A 393-amino-acid polypeptide reads, in one-letter code: Phosphoglycerate kinase (393 aa).

Residues 21–23 (DFN), Arg37, 60–63 (HLGR), Arg119, and Arg152 contribute to the substrate site. ATP-binding positions include Lys202, Glu323, and 349–352 (GGDT).

This sequence belongs to the phosphoglycerate kinase family. As to quaternary structure, monomer.

It localises to the cytoplasm. It carries out the reaction (2R)-3-phosphoglycerate + ATP = (2R)-3-phospho-glyceroyl phosphate + ADP. It functions in the pathway carbohydrate degradation; glycolysis; pyruvate from D-glyceraldehyde 3-phosphate: step 2/5. This chain is Phosphoglycerate kinase, found in Desulforudis audaxviator (strain MP104C).